We begin with the raw amino-acid sequence, 456 residues long: MQQTVTYGAKWKQFLTIFTPIVITQLTLFSMTFFDTTMSGNYSNQALAGVAIGSSFWAPVNAAFSGLLMAITPIIAQLIGAKKEKQVKNTVHNGLYIALFLAFILILINFLVVPMILTHMPVTAEVADIARHFLNGICIGIPAFFISAILRSFIDSLGLTRVTMLITLCTVPFNIFLNYCFIFGNFGFPEMGGAGSGYATGITYWLVVLVSVILIQTQTRLRKFGVFKGLTALRFSKIKEIIGIGVPNGLTILFETSIFSAVTILMGAFGTETIAAHQSANSVCTLLYAFPLSVASTLTILGGYETGAKRLKDAKQYRHIGMAAAILIGCVNGAILFFFRDIIAGFYTNDPALSNLIMHFLVYAILFQFADAVLSPVLGALRGYKDVTVTSIVAFISYWLIGLPVGYGLSFTNLGPFGYWIGLSTGLFVAAFILSIRVRKTEQKLSFNTKDAEISN.

Helical transmembrane passes span 13–34 (QFLT…MTFF), 54–76 (SSFW…PIIA), 95–117 (LYIA…PMIL), 132–154 (HFLN…RSFI), 161–183 (RVTM…CFIF), 193–215 (GAGS…VILI), 244–266 (IGVP…TILM), 286–308 (LLYA…ETGA), 321–343 (GMAA…RDII), 358–380 (MHFL…VLGA), 387–409 (VTVT…GYGL), and 414–436 (LGPF…ILSI).

Belongs to the multi antimicrobial extrusion (MATE) (TC 2.A.66.1) family.

It localises to the cell membrane. In terms of biological role, multidrug efflux pump. This is Probable multidrug resistance protein NorM (norM) from Listeria monocytogenes serovar 1/2a (strain ATCC BAA-679 / EGD-e).